The following is a 430-amino-acid chain: Tyrosine--tRNA ligase (430 aa).

Tyrosine 32 contributes to the L-tyrosine binding site. The 'HIGH' region motif lies at 37–46 (PTADSLHIGH). L-tyrosine-binding residues include tyrosine 172 and glutamine 176. Positions 232–236 (KFGKT) match the 'KMSKS' region motif. Lysine 235 lines the ATP pocket. In terms of domain architecture, S4 RNA-binding spans 362–429 (VKAVDLFVDN…GKKNYYLIIA (68 aa)).

Belongs to the class-I aminoacyl-tRNA synthetase family. TyrS type 1 subfamily. In terms of assembly, homodimer.

The protein localises to the cytoplasm. It catalyses the reaction tRNA(Tyr) + L-tyrosine + ATP = L-tyrosyl-tRNA(Tyr) + AMP + diphosphate + H(+). In terms of biological role, catalyzes the attachment of tyrosine to tRNA(Tyr) in a two-step reaction: tyrosine is first activated by ATP to form Tyr-AMP and then transferred to the acceptor end of tRNA(Tyr). This is Tyrosine--tRNA ligase from Bacteroides fragilis (strain YCH46).